Consider the following 124-residue polypeptide: Quinol oxidase subunit 4 (124 aa).

3 consecutive transmembrane segments (helical) span residues 16-36 (IVGF…AVYT), 44-64 (LWII…MFMH), and 78-98 (TLFG…IFAA).

It belongs to the cytochrome c oxidase bacterial subunit 4 family.

It localises to the cell membrane. It catalyses the reaction 2 a quinol + O2 = 2 a quinone + 2 H2O. In terms of biological role, catalyzes quinol oxidation with the concomitant reduction of oxygen to water. Major component for energy conversion during vegetative growth. The protein is Quinol oxidase subunit 4 (qoxD) of Bacillus subtilis (strain 168).